The chain runs to 420 residues: Cytochrome c biogenesis protein Ccs1 (420 aa).

3 helical membrane-spanning segments follow: residues 12–32 (LRFSIFLLLLISFCSIVGTVI), 71–91 (TWWFFALIFLFGLSLILCTFL), and 157–177 (IAPILVHLSMILILVGTIVGS).

It belongs to the Ccs1/CcsB family. As to quaternary structure, may interact with CcsA.

The protein resides in the plastid. The protein localises to the chloroplast thylakoid membrane. Functionally, required during biogenesis of c-type cytochromes (cytochrome c6 and cytochrome f) at the step of heme attachment. This is Cytochrome c biogenesis protein Ccs1 from Phaeodactylum tricornutum (strain CCAP 1055/1).